Consider the following 195-residue polypeptide: ATP-dependent Clp protease proteolytic subunit 2 (195 aa).

The Nucleophile role is filled by Ser98. Residue His123 is part of the active site.

Belongs to the peptidase S14 family. As to quaternary structure, fourteen ClpP subunits assemble into 2 heptameric rings which stack back to back to give a disk-like structure with a central cavity, resembling the structure of eukaryotic proteasomes.

It is found in the cytoplasm. The catalysed reaction is Hydrolysis of proteins to small peptides in the presence of ATP and magnesium. alpha-casein is the usual test substrate. In the absence of ATP, only oligopeptides shorter than five residues are hydrolyzed (such as succinyl-Leu-Tyr-|-NHMec, and Leu-Tyr-Leu-|-Tyr-Trp, in which cleavage of the -Tyr-|-Leu- and -Tyr-|-Trp bonds also occurs).. Functionally, cleaves peptides in various proteins in a process that requires ATP hydrolysis. Has a chymotrypsin-like activity. Plays a major role in the degradation of misfolded proteins. In Rhodopirellula baltica (strain DSM 10527 / NCIMB 13988 / SH1), this protein is ATP-dependent Clp protease proteolytic subunit 2.